A 149-amino-acid chain; its full sequence is Alpha-amylase/trypsin inhibitor CMb (149 aa).

An N-terminal signal peptide occupies residues 1 to 24 (MASKSSCDLLLAAVLVSIFAAVAA). An N-linked (GlcNAc...) asparagine glycan is attached at Asn124.

This sequence belongs to the protease inhibitor I6 (cereal trypsin/alpha-amylase inhibitor) family. As to quaternary structure, heterotetramer of one CMa, one CMb and two CMd chains. Post-translationally, five disulfide bonds, which are essential for the inhibitor activity, are probably present. Exists both in a glycosylated and in an unglycosylated form. The glycosylated form is a potent allergen. As to expression, endosperm.

The protein localises to the secreted. Its function is as follows. Part of a complex with inhibitory activity, but CMb is inactive as a separate subunit. The protein is Alpha-amylase/trypsin inhibitor CMb (IAT2) of Hordeum vulgare (Barley).